We begin with the raw amino-acid sequence, 207 residues long: MRRSKTAAPWPGTIVPRAFFNRMATEVAPQLLNKILAAADGRAGRIVEVEAYAGALDPAAHTYRGKTPRNATMFGPPGHFYVYFTYGMHWCCNCVCGPDGAGTGVLIRALEPLHGLEQMRAARPPRTRDRDLCRGPARLTQAMGIGGAQDGVDLVGARDGFAIVDDGMAPPADLAGGPRIGIRVGQDLPWRWSVPGNRYVSGAVPRI.

The protein belongs to the DNA glycosylase MPG family.

This Burkholderia cenocepacia (strain HI2424) protein is Putative 3-methyladenine DNA glycosylase.